The chain runs to 301 residues: Homoserine O-acetyltransferase (301 aa).

C142 (acyl-thioester intermediate) is an active-site residue. Substrate is bound by residues K163 and S192. H235 functions as the Proton acceptor in the catalytic mechanism. E237 is an active-site residue. R249 provides a ligand contact to substrate.

Belongs to the MetA family.

The protein localises to the cytoplasm. It carries out the reaction L-homoserine + acetyl-CoA = O-acetyl-L-homoserine + CoA. The protein operates within amino-acid biosynthesis; L-methionine biosynthesis via de novo pathway; O-acetyl-L-homoserine from L-homoserine: step 1/1. Its function is as follows. Transfers an acetyl group from acetyl-CoA to L-homoserine, forming acetyl-L-homoserine. This is Homoserine O-acetyltransferase from Clostridium acetobutylicum (strain ATCC 824 / DSM 792 / JCM 1419 / IAM 19013 / LMG 5710 / NBRC 13948 / NRRL B-527 / VKM B-1787 / 2291 / W).